The chain runs to 554 residues: Glutamine--tRNA ligase (554 aa).

The short motif at 34 to 44 is the 'HIGH' region element; the sequence is PEPNGYLHIGH. Residues 35–37 and 41–47 each bind ATP; these read EPN and HIGHAKS. Positions 67 and 212 each coordinate L-glutamine. ATP-binding positions include threonine 231, 261–262, and 269–271; these read RL and MSK. The 'KMSKS' region motif lies at 268–272; it reads VMSKR. The interaction with tRNA stretch occupies residues 317-324; it reads TKQDNTIE.

This sequence belongs to the class-I aminoacyl-tRNA synthetase family. Monomer.

It localises to the cytoplasm. It carries out the reaction tRNA(Gln) + L-glutamine + ATP = L-glutaminyl-tRNA(Gln) + AMP + diphosphate. This is Glutamine--tRNA ligase from Escherichia coli O7:K1 (strain IAI39 / ExPEC).